A 546-amino-acid chain; its full sequence is 2-isopropylmalate synthase (546 aa).

A Pyruvate carboxyltransferase domain is found at 8–271; that stretch reads ILIFDTTLRD…NSFFKRNPDS (264 aa). Mn(2+) is bound by residues D17, H208, H210, and N244. Residues 408 to 546 form a regulatory domain region; sequence QLCLVQVSCG…NKTFLSNPAN (139 aa).

This sequence belongs to the alpha-IPM synthase/homocitrate synthase family. LeuA type 1 subfamily. As to quaternary structure, homodimer. Mn(2+) serves as cofactor.

The protein localises to the cytoplasm. It catalyses the reaction 3-methyl-2-oxobutanoate + acetyl-CoA + H2O = (2S)-2-isopropylmalate + CoA + H(+). Its pathway is amino-acid biosynthesis; L-leucine biosynthesis; L-leucine from 3-methyl-2-oxobutanoate: step 1/4. In terms of biological role, catalyzes the condensation of the acetyl group of acetyl-CoA with 3-methyl-2-oxobutanoate (2-ketoisovalerate) to form 3-carboxy-3-hydroxy-4-methylpentanoate (2-isopropylmalate). The sequence is that of 2-isopropylmalate synthase from Prochlorococcus marinus (strain MIT 9312).